A 165-amino-acid polypeptide reads, in one-letter code: Large ribosomal subunit protein uL10 (165 aa).

Belongs to the universal ribosomal protein uL10 family. In terms of assembly, part of the ribosomal stalk of the 50S ribosomal subunit. The N-terminus interacts with L11 and the large rRNA to form the base of the stalk. The C-terminus forms an elongated spine to which L12 dimers bind in a sequential fashion forming a multimeric L10(L12)X complex.

Functionally, forms part of the ribosomal stalk, playing a central role in the interaction of the ribosome with GTP-bound translation factors. This Hamiltonella defensa subsp. Acyrthosiphon pisum (strain 5AT) protein is Large ribosomal subunit protein uL10.